Here is a 195-residue protein sequence, read N- to C-terminus: MEDIVIATNNQGKINDFKAIFKNQHVIGISELIEDFDVEETGATFEENARLKSEAAAHALNKRVIADDSGLEVFALNGEPGVYSARYAGLGKNDEDNIEKLLTNLEDVQDRRAQFVCVISMSAPNEKTKTFKGTVSGVITTERHGKNGFGYDPIFFVPELNKTMAEITNDEKGKISHRGNAIRLLKEYLEGEQHV.

8–13 contributes to the substrate binding site; it reads TNNQGK. Mg(2+) contacts are provided by E39 and D68. Catalysis depends on D68, which acts as the Proton acceptor. Substrate is bound by residues S69, 149–152, K172, and 177–178; these read FGYD and HR.

It belongs to the HAM1 NTPase family. As to quaternary structure, homodimer. Mg(2+) is required as a cofactor.

It carries out the reaction XTP + H2O = XMP + diphosphate + H(+). It catalyses the reaction dITP + H2O = dIMP + diphosphate + H(+). The catalysed reaction is ITP + H2O = IMP + diphosphate + H(+). Functionally, pyrophosphatase that catalyzes the hydrolysis of nucleoside triphosphates to their monophosphate derivatives, with a high preference for the non-canonical purine nucleotides XTP (xanthosine triphosphate), dITP (deoxyinosine triphosphate) and ITP. Seems to function as a house-cleaning enzyme that removes non-canonical purine nucleotides from the nucleotide pool, thus preventing their incorporation into DNA/RNA and avoiding chromosomal lesions. In Staphylococcus epidermidis (strain ATCC 12228 / FDA PCI 1200), this protein is dITP/XTP pyrophosphatase.